Consider the following 187-residue polypeptide: Structural protein ORF187 (187 aa).

Residues 65-85 (IYQPTAIAVSGVGGIIGALLA) traverse the membrane as a helical segment.

The protein resides in the host membrane. Its subcellular location is the virion. This Acidianus two-tailed virus (ATV) protein is Structural protein ORF187.